The chain runs to 164 residues: Telomerase-associated protein of 19 kDa (164 aa).

As to quaternary structure, component of the telomerase holoenzyme complex, composed of the catalytic core (the catalytic subunit TERT, the telomerase RNA template component TER and TAP65/p65), which is associated with two heterotrimeric subcomplexes: (i) the replication protein A (RPA)-related subcomplex, composed of TEB1, RPA2/TEB2 and RPA3/TEB3 and (ii) the CST-like subcomplex, composed of TAP75/p75, TAP45/p45 and TAP19/p19. TEB1 and the CST-like subcomplex are tethered to the catalytic core by TAP50/p50.

The protein resides in the chromosome. It is found in the telomere. Component of a CST-like subcomplex of the holoenzyme telomerase ribonucleoprotein complex, which stimulates telomerase complementary-strand synthesis. Telomerase is an essential ribonucleoprotein enzyme that copies new telomeric repeats onto chromosome ends by repetitively synthesizing the short telomere-repeat sequence 5'-TTGGGG-3' using an RNA template component TER. The CST-like subcomplex (also named 7-4-1) binds telomeric single-stranded DNA and coordinates telomere G-strand and C-strand synthesis. The sequence is that of Telomerase-associated protein of 19 kDa from Tetrahymena thermophila (strain SB210).